A 439-amino-acid chain; its full sequence is Ribosomal protein uS12 methylthiotransferase RimO (439 aa).

Residues 2 to 114 (SKLYLMSLGC…IDEMILKKTN (113 aa)) enclose the MTTase N-terminal domain. [4Fe-4S] cluster is bound by residues C11, C45, C77, C146, C150, and C153. The 232-residue stretch at 132–363 (TGSNSHAFIK…VDEVIEKSFE (232 aa)) folds into the Radical SAM core domain.

This sequence belongs to the methylthiotransferase family. RimO subfamily. The cofactor is [4Fe-4S] cluster.

The protein localises to the cytoplasm. The catalysed reaction is L-aspartate(89)-[ribosomal protein uS12]-hydrogen + (sulfur carrier)-SH + AH2 + 2 S-adenosyl-L-methionine = 3-methylsulfanyl-L-aspartate(89)-[ribosomal protein uS12]-hydrogen + (sulfur carrier)-H + 5'-deoxyadenosine + L-methionine + A + S-adenosyl-L-homocysteine + 2 H(+). In terms of biological role, catalyzes the methylthiolation of an aspartic acid residue of ribosomal protein uS12. The protein is Ribosomal protein uS12 methylthiotransferase RimO of Campylobacter jejuni subsp. jejuni serotype O:2 (strain ATCC 700819 / NCTC 11168).